Here is a 232-residue protein sequence, read N- to C-terminus: Small ribosomal subunit protein uS3 (232 aa).

The KH type-2 domain occupies 39 to 107 (VRQFLTKELQ…PAQINIAEVR (69 aa)). Positions 213 to 232 (AANAVEPKGDKPKKQRKGRK) are disordered.

It belongs to the universal ribosomal protein uS3 family. In terms of assembly, part of the 30S ribosomal subunit. Forms a tight complex with proteins S10 and S14.

Its function is as follows. Binds the lower part of the 30S subunit head. Binds mRNA in the 70S ribosome, positioning it for translation. The polypeptide is Small ribosomal subunit protein uS3 (Vibrio campbellii (strain ATCC BAA-1116)).